Reading from the N-terminus, the 509-residue chain is Maturase K (509 aa).

It belongs to the intron maturase 2 family. MatK subfamily.

The protein resides in the plastid. Its subcellular location is the chloroplast. Usually encoded in the trnK tRNA gene intron. Probably assists in splicing its own and other chloroplast group II introns. This is Maturase K from Thujopsis dolabrata (Hiba arborvitae).